The sequence spans 57 residues: Myrmicitoxin(1)-Pm7a (57 aa).

An N-terminal signal peptide occupies residues 1–23; sequence MMKIIYAFLLIAVVAFMGSGIMA. The propeptide occupies 24 to 31; sequence EPLAEAIA.

It belongs to the formicidae venom clade 4 family. As to expression, expressed by the venom gland.

It is found in the secreted. In terms of biological role, probable neurotoxin. This Pogonomyrmex maricopa (Maricopa harvester ant) protein is Myrmicitoxin(1)-Pm7a.